Here is a 317-residue protein sequence, read N- to C-terminus: 2,3-dihydroxyphenylpropionate/2,3-dihydroxicinnamic acid 1,2-dioxygenase (317 aa).

His115 functions as the Proton donor in the catalytic mechanism. The active-site Proton acceptor is His179.

Belongs to the LigB/MhpB extradiol dioxygenase family. Homotetramer. Fe(2+) serves as cofactor.

The enzyme catalyses 3-(2,3-dihydroxyphenyl)propanoate + O2 = (2Z,4E)-2-hydroxy-6-oxonona-2,4-dienedioate + H(+). It carries out the reaction (2E)-3-(2,3-dihydroxyphenyl)prop-2-enoate + O2 = (2Z,4E,7E)-2-hydroxy-6-oxonona-2,4,7-trienedioate + H(+). Its pathway is aromatic compound metabolism; 3-phenylpropanoate degradation. Its function is as follows. Catalyzes the non-heme iron(II)-dependent oxidative cleavage of 2,3-dihydroxyphenylpropionic acid and 2,3-dihydroxicinnamic acid into 2-hydroxy-6-ketononadienedioate and 2-hydroxy-6-ketononatrienedioate, respectively. The protein is 2,3-dihydroxyphenylpropionate/2,3-dihydroxicinnamic acid 1,2-dioxygenase of Burkholderia vietnamiensis (strain G4 / LMG 22486) (Burkholderia cepacia (strain R1808)).